A 157-amino-acid chain; its full sequence is SsrA-binding protein (157 aa).

Over residues 135–151 (DKRETEKKRDWSREKGR) the composition is skewed to basic and acidic residues. Residues 135–157 (DKRETEKKRDWSREKGRLLRARG) are disordered.

The protein belongs to the SmpB family.

Its subcellular location is the cytoplasm. Its function is as follows. Required for rescue of stalled ribosomes mediated by trans-translation. Binds to transfer-messenger RNA (tmRNA), required for stable association of tmRNA with ribosomes. tmRNA and SmpB together mimic tRNA shape, replacing the anticodon stem-loop with SmpB. tmRNA is encoded by the ssrA gene; the 2 termini fold to resemble tRNA(Ala) and it encodes a 'tag peptide', a short internal open reading frame. During trans-translation Ala-aminoacylated tmRNA acts like a tRNA, entering the A-site of stalled ribosomes, displacing the stalled mRNA. The ribosome then switches to translate the ORF on the tmRNA; the nascent peptide is terminated with the 'tag peptide' encoded by the tmRNA and targeted for degradation. The ribosome is freed to recommence translation, which seems to be the essential function of trans-translation. This chain is SsrA-binding protein, found in Rhodopseudomonas palustris (strain BisB5).